A 1000-amino-acid chain; its full sequence is Integrin alpha-PS5 (1000 aa).

7 FG-GAP repeats span residues 15-74, 75-137, 145-198, 199-261, 262-323, 324-379, and 386-448; these read KHLK…GSCS, HYVL…DTPP, SLIP…AAQG, SYAV…GEIV, RKLH…FKFE, KKII…GLRD, and DAPS…SESR. Residue Asn-58 is glycosylated (N-linked (GlcNAc...) asparagine). Asn-231 carries N-linked (GlcNAc...) asparagine glycosylation. Asn-516, Asn-592, Asn-622, Asn-732, Asn-771, Asn-829, Asn-842, Asn-853, and Asn-922 each carry an N-linked (GlcNAc...) asparagine glycan. The chain crosses the membrane as a helical span at residues 930–950; it reads IWYIILSLIAGHLLLGAMTYI. Residues 951-1000 lie on the Cytoplasmic side of the membrane; the sequence is LYKLRFFKRGKKEELKRLLEEHRSETKEPATDCEGNQEEINVEMHSDLEN. The segment covering 971–980 has biased composition (basic and acidic residues); it reads EHRSETKEPA. The segment at 971–1000 is disordered; the sequence is EHRSETKEPATDCEGNQEEINVEMHSDLEN.

This sequence belongs to the integrin alpha chain family. In terms of assembly, heterodimer of an alpha and a beta subunit. Alpha-PS5 associates with beta-PS. As to expression, expressed in all follicle cells overlying the oocyte during mid-oogenesis, the strongest expression is observed in the cells covering the anterior end of the oocyte and in the cells forming the dorsal appendages. After completion of oocyte enlargement, expression in main body follicle cells is down-regulated but persists strongly in the dorsal appendage forming cells. Expressed in lamellocytes.

It localises to the membrane. In terms of biological role, possible role in cell-cell interactions. Minor involvement in the establishment of the oocyte anterior-posterior length. The sequence is that of Integrin alpha-PS5 from Drosophila melanogaster (Fruit fly).